The chain runs to 822 residues: Integrator complex assembly factor BRAT1 (822 aa).

The tract at residues 100-200 (LGLFGESGAP…WPMCAQKIVN (101 aa)) is required for interaction with NDFIP1. HEAT repeat units lie at residues 495 to 531 (LLFLGELFPILQKRLCSPCWEVRDSALEFLTHLIRHW) and 544 to 576 (SEVPTLALQLLQDPESYVRASAVGAAGQLSSQG). Residue serine 743 is modified to Phosphoserine. The BRAT1-like motif signature appears at 820-822 (DCY). Cysteine 821 lines the Zn(2+) pocket.

The protein belongs to the BRAT1 family. As to quaternary structure, part of the multiprotein complex composed of BRAT1, WDR73, as well as integrator complex subunits INTS9 and INTS11. Interacts with BRCA1 and ATM. Interacts with MTOR and RPTOR. Interacts with NDFIP1. Interacts with SMC1A and PRKDC. Post-translationally, ubiquitinated by NEDD4, NEDD4L and ITCH; mono- and polyubiquitinated forms are detected. In terms of tissue distribution, high levels detected in the cortex and much lower levels detected in the cerebellum, spinal cord and lung (at protein level).

Its subcellular location is the nucleus. The protein resides in the cytoplasm. Its function is as follows. Component of a multiprotein complex required for the assembly of the RNA endonuclease module of the integrator complex. Associates with INTS9 and INTS11 in the cytoplasm and blocks the active site of INTS11 to inhibit the endonuclease activity of INTS11 before formation of the full integrator complex. Following dissociation of WDR73 of the complex, BRAT1 facilitates the nuclear import of the INTS9-INTS11 heterodimer. In the nucleus, INTS4 is integrated to the INTS9-INTS11 heterodimer and BRAT1 is released from the mature RNA endonuclease module by inositol hexakisphosphate (InsP6). BRAT1 is also involved in DNA damage response; activates kinases ATM, SMC1A and PRKDC by modulating their phosphorylation status following ionizing radiation (IR) stress. Plays a role in regulating mitochondrial function and cell proliferation. Required for protein stability of MTOR and MTOR-related proteins, and cell cycle progress by growth factors. In Mus musculus (Mouse), this protein is Integrator complex assembly factor BRAT1.